The following is a 118-amino-acid chain: Large ribosomal subunit protein bL20 (118 aa).

It belongs to the bacterial ribosomal protein bL20 family.

Its function is as follows. Binds directly to 23S ribosomal RNA and is necessary for the in vitro assembly process of the 50S ribosomal subunit. It is not involved in the protein synthesizing functions of that subunit. The protein is Large ribosomal subunit protein bL20 of Desulfotalea psychrophila (strain LSv54 / DSM 12343).